The sequence spans 375 residues: AA9 family lytic polysaccharide monooxygenase CEL1 (375 aa).

The first 16 residues, Met1–Ala16, serve as a signal peptide directing secretion. His119 provides a ligand contact to Cu(2+). Cys130 and Cys135 are joined by a disulfide. N-linked (GlcNAc...) asparagine glycosylation is present at Asn132. His196 contacts O2. N-linked (GlcNAc...) asparagine glycosylation is present at Asn197. Tyr212 is a Cu(2+) binding site. Residues Cys232 and Cys237 are joined by a disulfide bond. The interval Asn287–His375 is disordered. Residues Ser290–Ala341 show a composition bias toward low complexity. A glycan (N-linked (GlcNAc...) asparagine) is linked at Asn325. Residues Lys347–Val369 show a composition bias toward basic residues.

The protein belongs to the polysaccharide monooxygenase AA9 family. Cu(2+) is required as a cofactor.

Its subcellular location is the secreted. The protein resides in the cell wall. It carries out the reaction [(1-&gt;4)-beta-D-glucosyl]n+m + reduced acceptor + O2 = 4-dehydro-beta-D-glucosyl-[(1-&gt;4)-beta-D-glucosyl]n-1 + [(1-&gt;4)-beta-D-glucosyl]m + acceptor + H2O.. Its function is as follows. Lytic polysaccharide monooxygenase (LPMO) that depolymerizes polysaccharides via the oxidation of scissile alpha- or beta-(1-4)-glycosidic bonds, yielding C4 oxidation products. Catalysis by LPMOs requires the reduction of the active-site copper from Cu(II) to Cu(I) by a reducing agent and H(2)O(2) or O(2) as a cosubstrate. Required for the expression of stress response phenotypes, including thermotolerance, cell wall integrity, and efficient cell cycle progression. Promotes intrinsic fungal cell wall remodeling events required for efficient adaptation to the host environment. Required for virulence in a murine inhalational model of cryptococcal infection as well as in Galleria mellonella larvae. This Cryptococcus neoformans var. grubii serotype A (strain H99 / ATCC 208821 / CBS 10515 / FGSC 9487) (Filobasidiella neoformans var. grubii) protein is AA9 family lytic polysaccharide monooxygenase CEL1.